The sequence spans 240 residues: LexA repressor (240 aa).

A DNA-binding region (H-T-H motif) is located at residues 26–46 (FDEMKDALDLASKSGIHRLIT). Active-site for autocatalytic cleavage activity residues include S160 and K198.

The protein belongs to the peptidase S24 family. In terms of assembly, homodimer.

It catalyses the reaction Hydrolysis of Ala-|-Gly bond in repressor LexA.. Functionally, represses a number of genes involved in the response to DNA damage (SOS response), including recA and lexA. In the presence of single-stranded DNA, RecA interacts with LexA causing an autocatalytic cleavage which disrupts the DNA-binding part of LexA, leading to derepression of the SOS regulon and eventually DNA repair. This Agrobacterium fabrum (strain C58 / ATCC 33970) (Agrobacterium tumefaciens (strain C58)) protein is LexA repressor.